The following is a 113-amino-acid chain: Iron-sulfur cluster insertion protein ErpA (113 aa).

The iron-sulfur cluster site is built by Cys41, Cys105, and Cys107.

Belongs to the HesB/IscA family. In terms of assembly, homodimer. The cofactor is iron-sulfur cluster.

Required for insertion of 4Fe-4S clusters for at least IspG. The protein is Iron-sulfur cluster insertion protein ErpA of Actinobacillus pleuropneumoniae serotype 7 (strain AP76).